Here is a 198-residue protein sequence, read N- to C-terminus: FMN-dependent NADH:quinone oxidoreductase (198 aa).

FMN-binding positions include S10, 16–18 (SQS), 94–97 (MYNF), and 138–141 (TRGG).

It belongs to the azoreductase type 1 family. As to quaternary structure, homodimer. It depends on FMN as a cofactor.

It carries out the reaction 2 a quinone + NADH + H(+) = 2 a 1,4-benzosemiquinone + NAD(+). The catalysed reaction is N,N-dimethyl-1,4-phenylenediamine + anthranilate + 2 NAD(+) = 2-(4-dimethylaminophenyl)diazenylbenzoate + 2 NADH + 2 H(+). Its function is as follows. Quinone reductase that provides resistance to thiol-specific stress caused by electrophilic quinones. In terms of biological role, also exhibits azoreductase activity. Catalyzes the reductive cleavage of the azo bond in aromatic azo compounds to the corresponding amines. The chain is FMN-dependent NADH:quinone oxidoreductase from Shewanella sp. (strain ANA-3).